Consider the following 356-residue polypeptide: Trans-enoyl reductase pgmF (356 aa).

Residues 57 to 60 (VDFK), 175 to 178 (SGGC), 198 to 201 (STPN), Tyr216, 261 to 262 (VG), and 342 to 343 (AK) contribute to the NADP(+) site.

It belongs to the zinc-containing alcohol dehydrogenase family.

In terms of biological role, FAD-linked oxidoreductase; part of the gene cluster that mediates the biosynthesis of pleosporalin A, ascomycone A, as well as a third cryptic naphthoquinone derived pigment, all responsible for the coloration of conidia. The pathway begins with the biosynthesis of the cyclized heptaketide 3-acetonyl-1,6,8-trihydroxy-2-naphthaldehyde by the NR-PKS pgmA. The C-6 hydroxyl group is further methylated by the O-methyltransferase pgmB to yield fusarubinaldehyde which is in turn oxidized by the cytochrome P450 monooxygenase pgmC at C-9. The C-1 hydroxyl group is then methylated spontaneously. Although pgmE, pgmD and pgmH are essential for the production of pleosporalin A, it is not the case for the 2 other final products and it remains difficult to assign a specific function to each enzyme. PgmF and pgmG seem not to be involved in pigment biosynthesis although they were regulated by the cluster-specific transcription factor pgmR. This chain is Trans-enoyl reductase pgmF, found in Aspergillus terreus (strain NIH 2624 / FGSC A1156).